A 448-amino-acid polypeptide reads, in one-letter code: Fibulin-5 (448 aa).

Positions 1–23 (MPGLKRILTVTILALWLPHPGNA) are cleaved as a signal peptide. In terms of domain architecture, EGF-like 1; calcium-binding spans 42–82 (DIDECRTIPEACRGDMMCVNQNGGYLCIPRTNPVYRGPYSN). 17 disulfide bridges follow: cysteine 46-cysteine 59, cysteine 53-cysteine 68, cysteine 131-cysteine 144, cysteine 138-cysteine 153, cysteine 155-cysteine 166, cysteine 172-cysteine 181, cysteine 177-cysteine 190, cysteine 192-cysteine 205, cysteine 211-cysteine 221, cysteine 217-cysteine 230, cysteine 232-cysteine 245, cysteine 251-cysteine 262, cysteine 258-cysteine 271, cysteine 273-cysteine 286, cysteine 292-cysteine 305, cysteine 299-cysteine 314, and cysteine 320-cysteine 332. The Cell attachment site motif lies at 54–56 (RGD). The EGF-like 2; calcium-binding domain maps to 127–167 (DVDECATDSHQCNPTQICINTEGGYTCSCTDGYWLLEGQCL). The EGF-like 3; calcium-binding domain maps to 168–206 (DIDECRYGYCQQLCANVPGSYSCTCNPGFTLNDDGRSCQ). An EGF-like 4; calcium-binding domain is found at 207-246 (DVNECETENPCVQTCVNTYGSFICRCDPGYELEEDGIHCS). Residues 245-448 (CSDMDECSFS…LRIYVSQYPF (204 aa)) are interaction with LOXL1. The EGF-like 5; calcium-binding domain occupies 247 to 287 (DMDECSFSEFLCQHECVNQPGSYFCSCPPGYVLLEDNRSCQ). Asparagine 283 and asparagine 296 each carry an N-linked (GlcNAc...) asparagine glycan. The region spanning 288–333 (DINECEHRNHTCTPLQTCYNLQGGFKCIDPIVCEEPYLLIGDNRCM) is the EGF-like 6; calcium-binding domain.

The protein belongs to the fibulin family. Homodimer. Monomer, homodimerizes in presence of Ca(2+). Interacts with ELN. Interacts (via N-terminus) with the integrins ITGAV/ITGB3, ITGAV/ITGB5 and ITGA9/ITGB1. Interacts with FBN1 (via N-terminal domain). Forms a ternary complex with ELN and FBN1. Interacts with EFEMP2 with moderate affinity. Interacts with LOXL1. In terms of processing, N-glycosylated.

It is found in the secreted. The protein resides in the extracellular space. The protein localises to the extracellular matrix. Essential for elastic fiber formation, is involved in the assembly of continuous elastin (ELN) polymer and promotes the interaction of microfibrils and ELN. Stabilizes and organizes elastic fibers in the skin, lung and vasculature. Promotes adhesion of endothelial cells through interaction of integrins and the RGD motif. Vascular ligand for integrin receptors which may play a role in vascular development and remodeling. May act as an adapter that mediates the interaction between FBN1 and ELN. In Rattus norvegicus (Rat), this protein is Fibulin-5 (Fbln5).